The primary structure comprises 64 residues: Anti-sigma-G factor Gin (64 aa).

Zn(2+) is bound by residues Cys11, Cys14, Cys30, and Cys33.

In terms of assembly, probably functions as a homodimer. Interacts with sigma-G factor, recognition occurs via the first 71 residues of sigma-G. Zn(2+) serves as cofactor.

In terms of biological role, an anti-sigma-G factor, prevents premature activation of sigma-G factor in the forespore; overexpression leads to 1000-fold reduction in spore formation, spore formation stops after engulfment. Overexpression also inhibits sigma-G transcription activation activity. When both Gin and sigma-G are expressed in E.coli Gin inhibits sigma-G, strongly suggesting Gin inhibits by direct physical interaction. The polypeptide is Anti-sigma-G factor Gin (Bacillus subtilis (strain 168)).